We begin with the raw amino-acid sequence, 314 residues long: Lysophospholipase D GDPD1 (314 aa).

Over 1-3 the chain is Extracellular; the sequence is MSS. A helical membrane pass occupies residues 4 to 24; that stretch reads TAAFCLLSTLGGYLVTSFLLL. Over 25-195 the chain is Cytoplasmic; it reads KYPALLHQRK…VDKCYKENSD (171 aa). A GP-PDE domain is found at 40–309; it reads SRHISHRGGA…DYPTKLKDFL (270 aa). Residues Glu72, Asp74, and His87 each coordinate a divalent metal cation. The helical transmembrane segment at 196–216 threads the bilayer; that stretch reads IPILFSLQRVLLILGLFFTGL. Residues 217–314 lie on the Extracellular side of the membrane; sequence LPFVPIREQF…LKDFLNNFSA (98 aa).

This sequence belongs to the glycerophosphoryl diester phosphodiesterase family. In terms of tissue distribution, widely expressed.

It is found in the cytoplasm. It localises to the membrane. The protein localises to the perinuclear region. Its subcellular location is the endoplasmic reticulum. It carries out the reaction 1-hexadecanoyl-sn-glycero-3-phosphocholine + H2O = 1-hexadecanoyl-sn-glycero-3-phosphate + choline + H(+). It catalyses the reaction 1-hexadecanoyl-sn-glycero-3-phosphoethanolamine + H2O = 1-hexadecanoyl-sn-glycero-3-phosphate + ethanolamine + H(+). The catalysed reaction is N-hexadecanoyl-sn-glycero-3-phosphoethanolamine + H2O = N-hexadecanoylethanolamine + sn-glycerol 3-phosphate + H(+). The enzyme catalyses N-(5Z,8Z,11Z,14Z-eicosatetraenoyl)-1-(9Z-octadecenoyl)-sn-glycero-3-phosphoethanolamine + H2O = N-(5Z,8Z,11Z,14Z-eicosatetraenoyl)-ethanolamine + 1-(9Z-octadecenoyl)-sn-glycero-3-phosphate + H(+). It carries out the reaction N,1-di-(9Z-octadecenoyl)-sn-glycero-3-phosphoethanolamine + H2O = N-(9Z-octadecenoyl) ethanolamine + 1-(9Z-octadecenoyl)-sn-glycero-3-phosphate + H(+). It catalyses the reaction N-hexadecanoyl-1-(9Z-octadecenoyl)-sn-glycero-3-phosphoethanolamine + H2O = N-hexadecanoylethanolamine + 1-(9Z-octadecenoyl)-sn-glycero-3-phosphate + H(+). The catalysed reaction is a 1-O-alkyl-sn-glycero-3-phosphocholine + H2O = a 1-O-alkyl-sn-glycero-3-phosphate + choline + H(+). The enzyme catalyses 1-O-hexadecyl-sn-glycero-3-phosphocholine + H2O = 1-O-hexadecyl-sn-glycero-3-phosphate + choline + H(+). It carries out the reaction 1-(9Z-octadecenoyl)-sn-glycero-3-phosphocholine + H2O = 1-(9Z-octadecenoyl)-sn-glycero-3-phosphate + choline + H(+). It catalyses the reaction N,1-dihexadecanoyl-sn-glycero-3-phosphoethanolamine + H2O = N-hexadecanoylethanolamine + 1-hexadecanoyl-sn-glycero-3-phosphate + H(+). The catalysed reaction is 1-O-(1Z-octadecenyl)-sn-glycero-3-phospho-(N-5Z,8Z,11Z,14Z-eicosatetraenoyl)-ethanolamine + H2O = 1-O-(1Z-octadecenyl)-sn-glycero-3-phosphate + N-(5Z,8Z,11Z,14Z-eicosatetraenoyl)-ethanolamine + H(+). The enzyme catalyses 1-O-(1Z-octadecenyl)-sn-glycero-3-phospho-(N-9Z-octadecenoyl)-ethanolamine + H2O = 1-O-(1Z-octadecenyl)-sn-glycero-3-phosphate + N-(9Z-octadecenoyl) ethanolamine + H(+). It carries out the reaction 1-O-(1Z-octadecenyl)-sn-glycero-3-phospho-N-hexadecanoyl-ethanolamine + H2O = 1-O-(1Z-octadecenyl)-sn-glycero-3-phosphate + N-hexadecanoylethanolamine + H(+). With respect to regulation, lysophospholipase D activity is increased by magnesium and manganese and inhibited by calcium in a concentration dependent manner. Loss of lysophospholipase D activity by addition of EDTA. In terms of biological role, hydrolyzes lysoglycerophospholipids to produce lysophosphatidic acid (LPA) and the corresponding amines. Shows a preference for 1-O-alkyl-sn-glycero-3-phosphocholine (lyso-PAF), lysophosphatidylethanolamine (lyso-PE) and lysophosphatidylcholine (lyso-PC). May be involved in bioactive N-acylethanolamine biosynthesis from both N-acyl-lysoplasmenylethanolamin (N-acyl-lysoPlsEt) and N-acyl-lysophosphatidylethanolamin (N-acyl-lysoPE). In addition, hydrolyzes glycerophospho-N-acylethanolamine to N-acylethanolamine. Does not display glycerophosphodiester phosphodiesterase activity, since it cannot hydrolyze either glycerophosphoinositol or glycerophosphocholine. The sequence is that of Lysophospholipase D GDPD1 from Mus musculus (Mouse).